The primary structure comprises 1071 residues: Carbamoyl phosphate synthase pyrimidine-specific large chain (1071 aa).

Residues 1 to 401 (MPKRVDINKI…SLLKAVRSLE (401 aa)) form a carboxyphosphate synthetic domain region. Residues R129, R169, G175, G176, K208, I210, E215, G241, I242, H243, Q284, and E298 each contribute to the ATP site. One can recognise an ATP-grasp 1 domain in the interval 133-327 (RTLMNELNEP…IAKLAAKIAV (195 aa)). Q284, E298, and N300 together coordinate Mg(2+). 3 residues coordinate Mn(2+): Q284, E298, and N300. Positions 402-546 (ADVYHLELKD…YSTYEEENES (145 aa)) are oligomerization domain. The tract at residues 547–929 (VVTDKKSVMV…ALYKALIASG (383 aa)) is carbamoyl phosphate synthetic domain. The 191-residue stretch at 671–861 (EQALGELGVP…MANLATKIIL (191 aa)) folds into the ATP-grasp 2 domain. R707, R746, L748, E752, G777, V778, H779, S780, Q820, and E832 together coordinate ATP. Residues Q820, E832, and N834 each coordinate Mg(2+). Residues Q820, E832, and N834 each contribute to the Mn(2+) site. The 142-residue stretch at 930 to 1071 (IQIPNYGSVL…NTNQEAAVTI (142 aa)) folds into the MGS-like domain. An allosteric domain region spans residues 930–1071 (IQIPNYGSVL…NTNQEAAVTI (142 aa)).

Belongs to the CarB family. Composed of two chains; the small (or glutamine) chain promotes the hydrolysis of glutamine to ammonia, which is used by the large (or ammonia) chain to synthesize carbamoyl phosphate. Tetramer of heterodimers (alpha,beta)4. Interacts with BrxC. Mg(2+) is required as a cofactor. The cofactor is Mn(2+).

The enzyme catalyses hydrogencarbonate + L-glutamine + 2 ATP + H2O = carbamoyl phosphate + L-glutamate + 2 ADP + phosphate + 2 H(+). It carries out the reaction hydrogencarbonate + NH4(+) + 2 ATP = carbamoyl phosphate + 2 ADP + phosphate + 2 H(+). It participates in amino-acid biosynthesis; L-arginine biosynthesis; carbamoyl phosphate from bicarbonate: step 1/1. It functions in the pathway pyrimidine metabolism; UMP biosynthesis via de novo pathway; (S)-dihydroorotate from bicarbonate: step 1/3. Functionally, small subunit of the glutamine-dependent carbamoyl phosphate synthetase (CPSase). CPSase catalyzes the formation of carbamoyl phosphate from the ammonia moiety of glutamine, carbonate, and phosphate donated by ATP, constituting the first step of the biosynthetic pathway leading to pyrimidine nucleotides. The large subunit (synthetase) binds the substrates ammonia (free or transferred from glutamine from the small subunit), hydrogencarbonate and ATP and carries out an ATP-coupled ligase reaction, activating hydrogencarbonate by forming carboxy phosphate which reacts with ammonia to form carbamoyl phosphate. This chain is Carbamoyl phosphate synthase pyrimidine-specific large chain (pyrAB), found in Bacillus subtilis (strain 168).